The following is a 224-amino-acid chain: UPF0173 metal-dependent hydrolase Ta0764 (224 aa).

The protein belongs to the UPF0173 family.

This chain is UPF0173 metal-dependent hydrolase Ta0764, found in Thermoplasma acidophilum (strain ATCC 25905 / DSM 1728 / JCM 9062 / NBRC 15155 / AMRC-C165).